A 69-amino-acid chain; its full sequence is uncharacterized protein (69 aa).

This is an uncharacterized protein from Homo sapiens (Human).